The primary structure comprises 347 residues: MQHLVIRRPDDWHLHLRDGGMLRGVIADTSRHFARAIIMPNLVPPVVTSADAATYRERILAAIPAGHRFEPLMTLYLTEGTDPDDVEEGFRSGLVKAVKLYPAGATTNSSSGVRDIDKAMPVLERMAEVGVPLCVHGEVTTADVDIFDREAVFIETVLDPLRRRLPDLRITMEHVTTKDGVDYIREHAVNLAGSITTHHLIINRNAILVGGIKPHYYCLPVAKREMHRLALREAAISGDVRFFLGTDSAPHVDPLKECACGCAGIYTSINSLSCLAHVFEEEGALDRLEAFTSLNGPAWYGLPPNEETITLRKQEEPVGYPAKIETEAGPVTVFDPMFPLYWTVIEA.

The Zn(2+) site is built by histidine 13 and histidine 15. Substrate is bound by residues 15 to 17 (HLR) and asparagine 41. The Zn(2+) site is built by lysine 99, histidine 136, and histidine 174. At lysine 99 the chain carries N6-carboxylysine. Histidine 136 contributes to the substrate binding site. Leucine 219 contacts substrate. Aspartate 247 serves as a coordination point for Zn(2+). The active site involves aspartate 247. Residues histidine 251 and alanine 263 each contribute to the substrate site.

This sequence belongs to the metallo-dependent hydrolases superfamily. DHOase family. Class II DHOase subfamily. Homodimer. It depends on Zn(2+) as a cofactor.

It catalyses the reaction (S)-dihydroorotate + H2O = N-carbamoyl-L-aspartate + H(+). Its pathway is pyrimidine metabolism; UMP biosynthesis via de novo pathway; (S)-dihydroorotate from bicarbonate: step 3/3. In terms of biological role, catalyzes the reversible cyclization of carbamoyl aspartate to dihydroorotate. This is Dihydroorotase from Sinorhizobium medicae (strain WSM419) (Ensifer medicae).